The chain runs to 408 residues: S-adenosylmethionine synthase (408 aa).

ATP is bound at residue histidine 15. Aspartate 17 serves as a coordination point for Mg(2+). Glutamate 43 contributes to the K(+) binding site. The L-methionine site is built by glutamate 56 and glutamine 100. Residues glutamine 100 to glutamate 110 are flexible loop. ATP is bound by residues aspartate 171–lysine 173, lysine 248–phenylalanine 249, aspartate 257, arginine 263–lysine 264, alanine 280, and lysine 284. Aspartate 257 lines the L-methionine pocket. Position 288 (lysine 288) interacts with L-methionine.

Belongs to the AdoMet synthase family. Homotetramer; dimer of dimers. It depends on Mg(2+) as a cofactor. The cofactor is K(+).

It localises to the cytoplasm. The enzyme catalyses L-methionine + ATP + H2O = S-adenosyl-L-methionine + phosphate + diphosphate. Its pathway is amino-acid biosynthesis; S-adenosyl-L-methionine biosynthesis; S-adenosyl-L-methionine from L-methionine: step 1/1. Functionally, catalyzes the formation of S-adenosylmethionine (AdoMet) from methionine and ATP. The overall synthetic reaction is composed of two sequential steps, AdoMet formation and the subsequent tripolyphosphate hydrolysis which occurs prior to release of AdoMet from the enzyme. This is S-adenosylmethionine synthase from Synechococcus sp. (strain CC9902).